The chain runs to 504 residues: Sodium-coupled neutral amino acid transporter 3 (504 aa).

The N-linked (GlcNAc...) asparagine glycan is linked to Asn74. Helical transmembrane passes span 83 to 103, 106 to 126, 144 to 164, 187 to 207, and 213 to 233; these read GILG…LFLL, VALL…VVGI, AAAL…LYII, MNGN…LALM, and LGYS…AVIY. A disulfide bridge connects residues Cys240 and Cys275. 4 N-linked (GlcNAc...) asparagine glycosylation sites follow: Asn247, Asn248, Asn252, and Asn323. The next 5 membrane-spanning stretches (helical) occupy residues 324-344, 366-386, 408-428, 431-451, and 471-491; these read LSIA…YLTF, ILCV…IVLF, VLIA…APNI, IFGV…PAIF, and ALCF…FIII.

The protein belongs to the amino acid/polyamine transporter 2 family.

The protein localises to the cell membrane. It localises to the basolateral cell membrane. It catalyses the reaction L-glutamine(out) + Na(+)(out) + H(+)(in) = L-glutamine(in) + Na(+)(in) + H(+)(out). The catalysed reaction is L-asparagine(out) + Na(+)(out) + H(+)(in) = L-asparagine(in) + Na(+)(in) + H(+)(out). The enzyme catalyses L-histidine(out) + Na(+)(out) + H(+)(in) = L-histidine(in) + Na(+)(in) + H(+)(out). Symporter that cotransports specific neutral amino acids and sodium ions, coupled to an H(+) antiporter activity. Mainly participates in the glutamate-GABA-glutamine cycle in brain where it transports L-glutamine from astrocytes in the intercellular space for the replenishment of both neurotransmitters glutamate and gamma-aminobutyric acid (GABA) in neurons and also functions as the major influx transporter in ganglion cells mediating the uptake of glutamine. The transport activity is specific for L-glutamine, L-histidine and L-asparagine. The transport is electroneutral coupled to the cotransport of 1 Na(+) and the antiport of 1 H(+). The transport is pH dependent, saturable, Li(+) tolerant and functions in both direction depending on the concentration gradients of its substrates and cotransported ions. Also mediates an amino acid-gated H(+) conductance that is not stoichiometrically coupled to the amino acid transport but which influences the ionic gradients that drive the amino acid transport. In addition, may play a role in nitrogen metabolism, amino acid homeostasis, glucose metabolism and renal ammoniagenesis. In Homo sapiens (Human), this protein is Sodium-coupled neutral amino acid transporter 3.